Here is a 442-residue protein sequence, read N- to C-terminus: D-galactonate dehydratase family member SSLG_02014 (442 aa).

Substrate is bound at residue histidine 161. The active-site Proton donor/acceptor is the tyrosine 197. Residue aspartate 246 participates in Mg(2+) binding. Residue histidine 248 is the Proton donor/acceptor of the active site. Residues glutamate 272 and glutamate 298 each contribute to the Mg(2+) site. Residues glutamate 298, arginine 319, histidine 348, aspartate 352, and glutamate 375 each coordinate substrate.

Belongs to the mandelate racemase/muconate lactonizing enzyme family. GalD subfamily. Mg(2+) is required as a cofactor.

The enzyme catalyses D-mannonate = 2-dehydro-3-deoxy-D-gluconate + H2O. Its function is as follows. Has low D-mannonate dehydratase activity (in vitro), suggesting that this is not a physiological substrate and that it has no significant role in D-mannonate degradation in vivo. Has no detectable activity with a panel of 70 other acid sugars (in vitro). This Streptomyces sp. (strain SPB78) protein is D-galactonate dehydratase family member SSLG_02014.